The chain runs to 437 residues: tRNA-2-methylthio-N(6)-dimethylallyladenosine synthase (437 aa).

The MTTase N-terminal domain maps to 1-115 (MKVYIETMGC…ISQVIHKEKA (115 aa)). The [4Fe-4S] cluster site is built by Cys-10, Cys-46, Cys-78, Cys-148, Cys-152, and Cys-155. One can recognise a Radical SAM core domain in the interval 134–367 (KKAQIRSLLN…QNRHKEILEE (234 aa)). The 67-residue stretch at 370–436 (KLEVGKTHVV…KGRLMAATKG (67 aa)) folds into the TRAM domain.

Belongs to the methylthiotransferase family. MiaB subfamily. As to quaternary structure, monomer. The cofactor is [4Fe-4S] cluster.

The protein localises to the cytoplasm. The enzyme catalyses N(6)-dimethylallyladenosine(37) in tRNA + (sulfur carrier)-SH + AH2 + 2 S-adenosyl-L-methionine = 2-methylsulfanyl-N(6)-dimethylallyladenosine(37) in tRNA + (sulfur carrier)-H + 5'-deoxyadenosine + L-methionine + A + S-adenosyl-L-homocysteine + 2 H(+). In terms of biological role, catalyzes the methylthiolation of N6-(dimethylallyl)adenosine (i(6)A), leading to the formation of 2-methylthio-N6-(dimethylallyl)adenosine (ms(2)i(6)A) at position 37 in tRNAs that read codons beginning with uridine. The sequence is that of tRNA-2-methylthio-N(6)-dimethylallyladenosine synthase from Helicobacter pylori (strain ATCC 700392 / 26695) (Campylobacter pylori).